Here is a 606-residue protein sequence, read N- to C-terminus: Membrane protein insertase YidC (606 aa).

Residues Leu8–Pro28 traverse the membrane as a helical segment. Residues Thr59 to Pro78 are compositionally biased toward low complexity. Residues Thr59–Arg79 are disordered. 4 helical membrane-spanning segments follow: residues Met378–Trp398, Leu448–Ile468, Ser506–Leu526, and Ile542–Ile562.

This sequence belongs to the OXA1/ALB3/YidC family. Type 1 subfamily. Interacts with the Sec translocase complex via SecD. Specifically interacts with transmembrane segments of nascent integral membrane proteins during membrane integration.

Its subcellular location is the cell inner membrane. In terms of biological role, required for the insertion and/or proper folding and/or complex formation of integral membrane proteins into the membrane. Involved in integration of membrane proteins that insert both dependently and independently of the Sec translocase complex, as well as at least some lipoproteins. Aids folding of multispanning membrane proteins. The protein is Membrane protein insertase YidC of Dinoroseobacter shibae (strain DSM 16493 / NCIMB 14021 / DFL 12).